Consider the following 92-residue polypeptide: Putative pterin-4-alpha-carbinolamine dehydratase (92 aa).

It belongs to the pterin-4-alpha-carbinolamine dehydratase family.

It catalyses the reaction (4aS,6R)-4a-hydroxy-L-erythro-5,6,7,8-tetrahydrobiopterin = (6R)-L-erythro-6,7-dihydrobiopterin + H2O. This is Putative pterin-4-alpha-carbinolamine dehydratase from Natronomonas pharaonis (strain ATCC 35678 / DSM 2160 / CIP 103997 / JCM 8858 / NBRC 14720 / NCIMB 2260 / Gabara) (Halobacterium pharaonis).